We begin with the raw amino-acid sequence, 250 residues long: 5-oxoprolinase subunit A (250 aa).

Belongs to the LamB/PxpA family. In terms of assembly, forms a complex composed of PxpA, PxpB and PxpC.

It catalyses the reaction 5-oxo-L-proline + ATP + 2 H2O = L-glutamate + ADP + phosphate + H(+). Its function is as follows. Catalyzes the cleavage of 5-oxoproline to form L-glutamate coupled to the hydrolysis of ATP to ADP and inorganic phosphate. In Pseudomonas fluorescens (strain ATCC BAA-477 / NRRL B-23932 / Pf-5), this protein is 5-oxoprolinase subunit A.